We begin with the raw amino-acid sequence, 324 residues long: Acetyl-coenzyme A carboxylase carboxyl transferase subunit alpha (324 aa).

A CoA carboxyltransferase C-terminal domain is found at 41–291 (RLDRLKEKIY…QEYVLQEWLK (251 aa)).

It belongs to the AccA family. Acetyl-CoA carboxylase is a heterohexamer composed of biotin carboxyl carrier protein (AccB), biotin carboxylase (AccC) and two subunits each of ACCase subunit alpha (AccA) and ACCase subunit beta (AccD).

The protein localises to the cytoplasm. The catalysed reaction is N(6)-carboxybiotinyl-L-lysyl-[protein] + acetyl-CoA = N(6)-biotinyl-L-lysyl-[protein] + malonyl-CoA. The protein operates within lipid metabolism; malonyl-CoA biosynthesis; malonyl-CoA from acetyl-CoA: step 1/1. Functionally, component of the acetyl coenzyme A carboxylase (ACC) complex. First, biotin carboxylase catalyzes the carboxylation of biotin on its carrier protein (BCCP) and then the CO(2) group is transferred by the carboxyltransferase to acetyl-CoA to form malonyl-CoA. This is Acetyl-coenzyme A carboxylase carboxyl transferase subunit alpha from Chlamydia muridarum (strain MoPn / Nigg).